The sequence spans 261 residues: UPF0328 protein ECU02_0020/ECU04_1700 (261 aa).

A disordered region spans residues methionine 1–isoleucine 20. Residues glutamate 11–isoleucine 20 are compositionally biased toward basic and acidic residues.

Belongs to the UPF0328 family.

This Encephalitozoon cuniculi (strain GB-M1) (Microsporidian parasite) protein is UPF0328 protein ECU02_0020/ECU04_1700.